Consider the following 2472-residue polypeptide: Spectrin alpha chain, non-erythrocytic 1 (2472 aa).

The residue at position 1 (Met-1) is an N-acetylmethionine. Spectrin repeat units follow at residues 45–146 (RFQF…IKLL), 150–251 (KLVQ…QGKL), 256–358 (EVQR…ARLD), 361–465 (YRLQ…QYEQ), 468–570 (DLQL…AQLA), 574–676 (HLQQ…KLRE), 679–781 (QQQQ…QKLA), 785–888 (RLQQ…DLED), and 891–961 (QAQQ…QQVA). Ser-587 carries the phosphoserine modification. N6-acetyllysine is present on Lys-637. Lys-803 is modified (N6-acetyllysine). 6 positions are modified to phosphoserine: Ser-924, Ser-982, Ser-999, Ser-1029, Ser-1031, and Ser-1041. One can recognise an SH3 domain in the interval 967–1026 (TGKELVLALYDYQEKSPREVTMKKGDILTLLNSTNKDWWKVEVNDRQGFVPAAYVKKLDP). The Spectrin 10 repeat unit spans residues 1096 to 1166 (LFREANELQQ…LESEGLMAEE (71 aa)). Phosphotyrosine is present on Tyr-1176. Residues Ser-1190, Ser-1207, Ser-1217, Ser-1291, Ser-1306, Ser-1323, and Ser-1338 each carry the phosphoserine modification. A Spectrin 11 repeat occupies 1233-1336 (HEVQRFHRDA…RADQRKAKLG (104 aa)). Spectrin repeat units follow at residues 1339-1441 (HDLQ…RMML) and 1446-1549 (ELQL…KLGE). At Lys-1519 the chain carries N6-acetyllysine. Residues Ser-1550, Ser-1557, Ser-1578, Ser-1615, and Ser-1647 each carry the phosphoserine modification. 7 Spectrin repeats span residues 1552–1656 (TLQQ…KLKE), 1659–1762 (KQQN…KLSE), 1764–1868 (HRLH…RLEE), 1871–1974 (EYQQ…KLDE), 1978–2081 (FLQF…KLLE), 2092–2194 (LFLT…LELQ), and 2206–2310 (LRQE…NLEQ). Thr-2020 is modified (phosphothreonine). The residue at position 2052 (Lys-2052) is an N6-acetyllysine. Thr-2066 carries the post-translational modification Phosphothreonine. EF-hand domains follow at residues 2323–2358 (EALKEFSMMFKHFDKDKSGRLNHQEFKSCLRSLGYD), 2366–2401 (EPDPEFEAILDTVDPNRDGHVSLQEYMAFMISRETE), and 2404–2439 (KSSEEIESAFRALSSEGKPYVTKEELYQNLTREQAD). Residues Asp-2336, Asp-2338, Ser-2340, Arg-2342, Glu-2347, Asp-2379, Asn-2381, Asp-2383, His-2385, and Glu-2390 each contribute to the Ca(2+) site. The residue at position 2421 (Lys-2421) is an N6-acetyllysine.

This sequence belongs to the spectrin family. As to quaternary structure, like erythrocyte spectrin, the spectrin-like proteins are capable of forming dimers which can further associate to tetramers. Interacts (via C-terminal spectrin repeats) with TRPC4. Interacts with CALM and EMD. Interacts with isoform 1 of ACP1. Identified in a complex with ACTN4, CASK, IQGAP1, MAGI2, NPHS1 and SPTBN1. Interacts with SHANK3 (via ANK repeats). Interacts with CLN3; this interaction regulates the fodrin localization at the plasma membrane. Phosphorylation of Tyr-1176 decreases sensitivity to cleavage by calpain in vitro. Expressed in the foot process layer of podocytes in the kidney glomerulus and in tubules (at protein level).

It is found in the cytoplasm. The protein localises to the cytoskeleton. The protein resides in the cell cortex. In terms of biological role, fodrin, which seems to be involved in secretion, interacts with calmodulin in a calcium-dependent manner and is thus candidate for the calcium-dependent movement of the cytoskeleton at the membrane. The polypeptide is Spectrin alpha chain, non-erythrocytic 1 (Sptan1) (Rattus norvegicus (Rat)).